The following is a 245-amino-acid chain: 4-hydroxy-tetrahydrodipicolinate reductase (245 aa).

NAD(+)-binding positions include 7-12 (GAKGKV), 75-77 (GTT), and 102-105 (APNF). The active-site Proton donor/acceptor is the histidine 132. Residue histidine 133 participates in (S)-2,3,4,5-tetrahydrodipicolinate binding. Lysine 136 (proton donor) is an active-site residue. 142–143 (GT) contacts (S)-2,3,4,5-tetrahydrodipicolinate.

This sequence belongs to the DapB family.

The protein localises to the cytoplasm. The catalysed reaction is (S)-2,3,4,5-tetrahydrodipicolinate + NAD(+) + H2O = (2S,4S)-4-hydroxy-2,3,4,5-tetrahydrodipicolinate + NADH + H(+). It carries out the reaction (S)-2,3,4,5-tetrahydrodipicolinate + NADP(+) + H2O = (2S,4S)-4-hydroxy-2,3,4,5-tetrahydrodipicolinate + NADPH + H(+). It participates in amino-acid biosynthesis; L-lysine biosynthesis via DAP pathway; (S)-tetrahydrodipicolinate from L-aspartate: step 4/4. In terms of biological role, catalyzes the conversion of 4-hydroxy-tetrahydrodipicolinate (HTPA) to tetrahydrodipicolinate. This chain is 4-hydroxy-tetrahydrodipicolinate reductase, found in Mycobacterium bovis (strain BCG / Pasteur 1173P2).